The chain runs to 119 residues: Ribonuclease P protein component (119 aa).

Belongs to the RnpA family. In terms of assembly, consists of a catalytic RNA component (M1 or rnpB) and a protein subunit.

It carries out the reaction Endonucleolytic cleavage of RNA, removing 5'-extranucleotides from tRNA precursor.. RNaseP catalyzes the removal of the 5'-leader sequence from pre-tRNA to produce the mature 5'-terminus. It can also cleave other RNA substrates such as 4.5S RNA. The protein component plays an auxiliary but essential role in vivo by binding to the 5'-leader sequence and broadening the substrate specificity of the ribozyme. This chain is Ribonuclease P protein component, found in Aeromonas hydrophila subsp. hydrophila (strain ATCC 7966 / DSM 30187 / BCRC 13018 / CCUG 14551 / JCM 1027 / KCTC 2358 / NCIMB 9240 / NCTC 8049).